The primary structure comprises 329 residues: BTB/POZ domain-containing adapter for CUL3-mediated RhoA degradation protein 1 (329 aa).

The interval M1–Y31 is disordered. The region spanning K41–E109 is the BTB domain.

This sequence belongs to the BACURD family. In terms of assembly, homotetramer; forms a two-fold symmetric tetramer in solution. Interacts with CUL3; interaction is direct and forms a 5:5 heterodecamer. Component of the BCR(KCTD13) E3 ubiquitin ligase complex, at least composed of CUL3, KCTD13/BACURD1 and RBX1. Interacts with RHOA; with a preference for RhoA-GDP. Interacts with POLD2 and PCNA. Interacts with SPRTN.

It localises to the nucleus. It participates in protein modification; protein ubiquitination. Functionally, substrate-specific adapter of a BCR (BTB-CUL3-RBX1) E3 ubiquitin-protein ligase complex required for synaptic transmission. The BCR(KCTD13) E3 ubiquitin ligase complex mediates the ubiquitination of RHOA, leading to its degradation by the proteasome, thereby regulating the actin cytoskeleton and promoting synaptic transmission. This chain is BTB/POZ domain-containing adapter for CUL3-mediated RhoA degradation protein 1 (Kctd13), found in Mus musculus (Mouse).